The sequence spans 214 residues: Phosphoribosylglycinamide formyltransferase (214 aa).

Residue 12 to 14 (GSN) participates in N(1)-(5-phospho-beta-D-ribosyl)glycinamide binding. (6R)-10-formyltetrahydrofolate-binding positions include 105-108 (LLIL) and Asn-123. The Proton donor role is filled by His-125. Asp-167 is a (6R)-10-formyltetrahydrofolate binding site. Glu-197 is a N(1)-(5-phospho-beta-D-ribosyl)glycinamide binding site.

This sequence belongs to the GART family.

The catalysed reaction is N(1)-(5-phospho-beta-D-ribosyl)glycinamide + (6R)-10-formyltetrahydrofolate = N(2)-formyl-N(1)-(5-phospho-beta-D-ribosyl)glycinamide + (6S)-5,6,7,8-tetrahydrofolate + H(+). It participates in purine metabolism; IMP biosynthesis via de novo pathway; N(2)-formyl-N(1)-(5-phospho-D-ribosyl)glycinamide from N(1)-(5-phospho-D-ribosyl)glycinamide (10-formyl THF route): step 1/1. This is Phosphoribosylglycinamide formyltransferase from Saccharomyces cerevisiae (strain ATCC 204508 / S288c) (Baker's yeast).